A 114-amino-acid polypeptide reads, in one-letter code: Superoxide dismutase [Cu-Zn] (114 aa).

Positions 37, 39, and 54 each coordinate Cu cation. Residues 49–73 form a disordered region; sequence MSSGPHYNPRNKEHGAPTDENRHLG. Positions 54, 62, 71, and 74 each coordinate Zn(2+). Residues 58–73 are compositionally biased toward basic and acidic residues; it reads RNKEHGAPTDENRHLG. H111 lines the Cu cation pocket.

This sequence belongs to the Cu-Zn superoxide dismutase family. Homodimer. The cofactor is Cu cation. Zn(2+) is required as a cofactor.

The protein resides in the cytoplasm. The enzyme catalyses 2 superoxide + 2 H(+) = H2O2 + O2. Its function is as follows. Destroys radicals which are normally produced within the cells and which are toxic to biological systems. The sequence is that of Superoxide dismutase [Cu-Zn] from Drosophila madeirensis (Fruit fly).